We begin with the raw amino-acid sequence, 440 residues long: Xylose isomerase (440 aa).

Catalysis depends on residues H100 and D103. The Mg(2+) site is built by E231, E267, H270, D295, D306, D308, and D338.

It belongs to the xylose isomerase family. Homotetramer. Mg(2+) serves as cofactor.

It is found in the cytoplasm. The enzyme catalyses alpha-D-xylose = alpha-D-xylulofuranose. This is Xylose isomerase from Paraburkholderia phytofirmans (strain DSM 17436 / LMG 22146 / PsJN) (Burkholderia phytofirmans).